Reading from the N-terminus, the 3351-residue chain is Apolipophorins (3351 aa).

The signal sequence occupies residues 1-25; the sequence is MARMKYNIALIGILASVLLTIAVNA. A Vitellogenin domain is found at 43–641; the sequence is YIPGNYYDYS…SQHGFLPRSS (599 aa). 7 N-linked (GlcNAc...) asparagine glycosylation sites follow: Asn67, Asn644, Asn1514, Asn1744, Asn1932, Asn1979, and Asn2822. In terms of domain architecture, VWFD spans 2786–2952; the sequence is LRGHVVDGKH…DYGVGKCTAI (167 aa).

Interacts with Nrx-1 (via cytoplasmic domain); the interaction supports apolpp/ApoLI protein stability. In terms of processing, may be modified covalently by lipidation. Cleaved into 2 chains by furin protease. However, prevention of cleavage does not impair its function. In terms of tissue distribution, during stage 12, it is highly present throughout the yolk sac. By late stage 14, it localizes in the lateral fat body cells. Starting at stage 14, it localizes to the apodemes. Component of hemolymph clots (at protein level). Expressed in the amniosera. Expressed in rhabdomere of photoreceptor cells in retina (at protein level). Expressed in rhabdomere of photoreceptor cells in retina (at protein level). As to expression, expressed in simper cells as well as interphotoreceptor matrix (at protein level).

The protein localises to the secreted. It is found in the cell projection. Its subcellular location is the rhabdomere. Functionally, constitutes the major component of lipophorin, which mediates transport for various types of lipids in hemolymph. Acts by forming lipoprotein particles that bind lipoproteins and lipids. Also involved in the transport of hydrophobic ligands like juvenile hormones, pheromone hydrocarbons and carotenoids. Required for morphogens wingless (wg) and hedgehog (hh) function, probably by acting as vehicles for the movement of wg and hh, explaining how covalently lipidated wg and hh can spread over long distances. May also be involved in transport and/or metabolism of heme. Involved in yolk granule formation. May be a component of yolk incorporated into yolk granules via yl/yolkless-mediated endocytosis and the endolysosomal pathway. The polypeptide is Apolipophorins (Drosophila melanogaster (Fruit fly)).